A 38-amino-acid polypeptide reads, in one-letter code: Photosystem II reaction center protein L (38 aa).

The helical transmembrane segment at 17 to 37 threads the bilayer; sequence SLYWGLLLIFVLAVLFSSYIF.

It belongs to the PsbL family. In terms of assembly, PSII is composed of 1 copy each of membrane proteins PsbA, PsbB, PsbC, PsbD, PsbE, PsbF, PsbH, PsbI, PsbJ, PsbK, PsbL, PsbM, PsbT, PsbX, PsbY, PsbZ, Psb30/Ycf12, at least 3 peripheral proteins of the oxygen-evolving complex and a large number of cofactors. It forms dimeric complexes.

It localises to the plastid. The protein localises to the chloroplast thylakoid membrane. Its function is as follows. One of the components of the core complex of photosystem II (PSII). PSII is a light-driven water:plastoquinone oxidoreductase that uses light energy to abstract electrons from H(2)O, generating O(2) and a proton gradient subsequently used for ATP formation. It consists of a core antenna complex that captures photons, and an electron transfer chain that converts photonic excitation into a charge separation. This subunit is found at the monomer-monomer interface and is required for correct PSII assembly and/or dimerization. The chain is Photosystem II reaction center protein L from Oltmannsiellopsis viridis (Marine flagellate).